The following is a 494-amino-acid chain: Inositol-trisphosphate 3-kinase homolog (494 aa).

ATP contacts are provided by residues S206, K218, 260 to 262 (EDL), and D276. Substrate is bound by residues K278 and 322 to 329 (KLRYMQFR). Residues K346 and D426 each coordinate ATP. K429 lines the substrate pocket.

Belongs to the inositol phosphokinase (IPK) family. Expressed in spermatheca.

The enzyme catalyses 1D-myo-inositol 1,4,5-trisphosphate + ATP = 1D-myo-inositol 1,3,4,5-tetrakisphosphate + ADP + H(+). Unlike mammalian IP3K, may not be regulated by calmodulin. Its function is as follows. Probably by regulating inositol 1,4,5-trisphosphate levels, negatively regulates posterior body wall muscle contractions required for defecation and let-23 signaling pathway that controls spermathecal dilation and ovulation. May also regulate ovulation downstream of actin cross-linker fln-1. The sequence is that of Inositol-trisphosphate 3-kinase homolog from Caenorhabditis elegans.